Reading from the N-terminus, the 401-residue chain is Beta-ketoadipyl-CoA thiolase (401 aa).

The active-site Acyl-thioester intermediate is Cys90. Residues His357 and Cys387 each act as proton acceptor in the active site.

This sequence belongs to the thiolase-like superfamily. Thiolase family.

The enzyme catalyses succinyl-CoA + acetyl-CoA = 3-oxoadipyl-CoA + CoA. It functions in the pathway aromatic compound metabolism; phenylacetate degradation. In terms of biological role, catalyzes thiolytic cleavage of beta-ketoadipyl-CoA to succinyl-CoA and acetyl-CoA. The chain is Beta-ketoadipyl-CoA thiolase (paaJ) from Escherichia coli.